The chain runs to 347 residues: MSVMFDPDTAIYPFPPKPTPLSIDEKAYYREKIKRLLKERNAVMVAHYYTDPEIQQLAEETGGCISDSLEMARFGAKHPASTLLVAGVRFMGETAKILSPEKTILMPTLQVECSLDLGCPVEEFNAFYDAHPDRTVVVYANTSAAVKARADWVVTSSIAVELIDHLDSLGEKIIWAPDKHLGRYVQKQTGGDILCWQGACIVHDEFKTQALTRLQEEYPDAAILVHPESPQAIVDMADAVGSTSQLIAAAKALPHQRLIVATDRGIFYKMQQAVPDKELLEAPTAGEGATCRSCAHCPWMAMNDLQAIAEALEQEGSNHEVHVDERLRERALVPLNRMLDFAATLRG.

The iminosuccinate site is built by His-47 and Ser-68. Cys-113 serves as a coordination point for [4Fe-4S] cluster. Iminosuccinate-binding positions include 139-141 and Ser-156; that span reads YAN. Position 200 (Cys-200) interacts with [4Fe-4S] cluster. Iminosuccinate-binding positions include 226-228 and Thr-243; that span reads HPE. Position 297 (Cys-297) interacts with [4Fe-4S] cluster.

It belongs to the quinolinate synthase family. Type 1 subfamily. It depends on [4Fe-4S] cluster as a cofactor.

It is found in the cytoplasm. The enzyme catalyses iminosuccinate + dihydroxyacetone phosphate = quinolinate + phosphate + 2 H2O + H(+). It functions in the pathway cofactor biosynthesis; NAD(+) biosynthesis; quinolinate from iminoaspartate: step 1/1. Functionally, catalyzes the condensation of iminoaspartate with dihydroxyacetone phosphate to form quinolinate. The chain is Quinolinate synthase from Shigella flexneri.